We begin with the raw amino-acid sequence, 321 residues long: Reticulon-2 (321 aa).

2 disordered regions span residues 1–36 and 65–85; these read MGHV…SPVT and PPVR…PREE. Positions 134-321 constitute a Reticulon domain; sequence VKDLLYWRDI…TVKKPPAKQK (188 aa). Helical transmembrane passes span 163 to 183 and 250 to 270; these read FSVI…TLTL and FLVI…ITVL.

Its subcellular location is the endoplasmic reticulum membrane. The protein resides in the sarcoplasmic reticulum membrane. It localises to the cell membrane. The protein localises to the sarcolemma. It is found in the T-tubule. Its subcellular location is the cytoplasm. The protein resides in the myofibril. It localises to the sarcomere. The protein localises to the z line. It is found in the cytoskeleton. Its function is as follows. Inhibits amyloid precursor protein processing, probably by blocking BACE1 activity. Enhances trafficking of the glutamate transporter SLC1A1/EAAC1 from the endoplasmic reticulum to the cell surface. Plays a role in the translocation of SLC2A4/GLUT4 from intracellular membranes to the cell membrane which facilitates the uptake of glucose into the cell. The chain is Reticulon-2 from Xenopus tropicalis (Western clawed frog).